The chain runs to 117 residues: Prefoldin subunit beta (117 aa).

It belongs to the prefoldin subunit beta family. Heterohexamer of two alpha and four beta subunits.

Its subcellular location is the cytoplasm. Functionally, molecular chaperone capable of stabilizing a range of proteins. Seems to fulfill an ATP-independent, HSP70-like function in archaeal de novo protein folding. This Thermococcus gammatolerans (strain DSM 15229 / JCM 11827 / EJ3) protein is Prefoldin subunit beta.